The following is a 578-amino-acid chain: Proline--tRNA ligase (578 aa).

It belongs to the class-II aminoacyl-tRNA synthetase family. ProS type 1 subfamily. As to quaternary structure, homodimer.

The protein localises to the cytoplasm. It carries out the reaction tRNA(Pro) + L-proline + ATP = L-prolyl-tRNA(Pro) + AMP + diphosphate. In terms of biological role, catalyzes the attachment of proline to tRNA(Pro) in a two-step reaction: proline is first activated by ATP to form Pro-AMP and then transferred to the acceptor end of tRNA(Pro). As ProRS can inadvertently accommodate and process non-cognate amino acids such as alanine and cysteine, to avoid such errors it has two additional distinct editing activities against alanine. One activity is designated as 'pretransfer' editing and involves the tRNA(Pro)-independent hydrolysis of activated Ala-AMP. The other activity is designated 'posttransfer' editing and involves deacylation of mischarged Ala-tRNA(Pro). The misacylated Cys-tRNA(Pro) is not edited by ProRS. In Burkholderia mallei (strain ATCC 23344), this protein is Proline--tRNA ligase.